We begin with the raw amino-acid sequence, 185 residues long: NADH-quinone oxidoreductase subunit B (185 aa).

The [4Fe-4S] cluster site is built by Cys-37, Cys-38, Cys-103, and Cys-132.

Belongs to the complex I 20 kDa subunit family. NDH-1 is composed of 14 different subunits. Subunits NuoB, C, D, E, F, and G constitute the peripheral sector of the complex. [4Fe-4S] cluster is required as a cofactor.

It localises to the cell membrane. The catalysed reaction is a quinone + NADH + 5 H(+)(in) = a quinol + NAD(+) + 4 H(+)(out). In terms of biological role, NDH-1 shuttles electrons from NADH, via FMN and iron-sulfur (Fe-S) centers, to quinones in the respiratory chain. The immediate electron acceptor for the enzyme in this species is believed to be a menaquinone. Couples the redox reaction to proton translocation (for every two electrons transferred, four hydrogen ions are translocated across the cytoplasmic membrane), and thus conserves the redox energy in a proton gradient. This chain is NADH-quinone oxidoreductase subunit B, found in Thermobifida fusca (strain YX).